We begin with the raw amino-acid sequence, 372 residues long: Protein-glutamate methylesterase/protein-glutamine glutaminase 1 (372 aa).

The 118-residue stretch at 4-121 folds into the Response regulatory domain; it reads KVLVVDDSSF…ATNKDDAILL (118 aa). Position 55 is a 4-aspartylphosphate (D55). The disordered stretch occupies residues 138–174; that stretch reads VVRPTTPTPPPRSSASSVLGGVSTHTQPAPVRSSHAA. The CheB-type methylesterase domain occupies 179-372; sequence SGKQYKLLLI…ESILKESARG (194 aa). Catalysis depends on residues S191, H218, and D314.

It belongs to the CheB family. In terms of processing, phosphorylated by CheA. Phosphorylation of the N-terminal regulatory domain activates the methylesterase activity.

It localises to the cytoplasm. It carries out the reaction [protein]-L-glutamate 5-O-methyl ester + H2O = L-glutamyl-[protein] + methanol + H(+). The enzyme catalyses L-glutaminyl-[protein] + H2O = L-glutamyl-[protein] + NH4(+). Functionally, involved in chemotaxis. Part of a chemotaxis signal transduction system that modulates chemotaxis in response to various stimuli. Catalyzes the demethylation of specific methylglutamate residues introduced into the chemoreceptors (methyl-accepting chemotaxis proteins or MCP) by CheR. Also mediates the irreversible deamidation of specific glutamine residues to glutamic acid. This chain is Protein-glutamate methylesterase/protein-glutamine glutaminase 1, found in Shewanella sp. (strain MR-4).